Here is an 834-residue protein sequence, read N- to C-terminus: Enhancer of filamentation 1 (834 aa).

Residues 3 to 65 (ARNLMARALY…PGNRVKLLIG (63 aa)) enclose the SH3 domain. 7 positions are modified to phosphotyrosine: Y92, Y164, Y166, Y177, Y189, Y214, and Y223. S296 is subject to Phosphoserine. A Phosphotyrosine modification is found at Y317. 2 disordered regions span residues 328-402 (PPAE…DKRL) and 584-624 (SQMP…SERS). Residues 332-344 (TSEKANPEERDGV) are compositionally biased toward basic and acidic residues. The Caspase cleavage related site motif lies at 360–363 (DVVD). A compositionally biased stretch (low complexity) spans 368-397 (LSFSSTGSTRSNMSTSSTTSKESSVSASPS). Residue S369 is modified to Phosphoserine. A divergent helix-loop-helix motif region spans residues 710–760 (FYYDQCETHYISLLNAIDALFSCVSSAQPPRIFVAHSKFVILSAHKLVFIG). Residues 710-834 (FYYDQCETHY…KRSLLEMATF (125 aa)) form a required for interaction with PLK1 region. S780 is subject to Phosphoserine. T804 carries the post-translational modification Phosphothreonine.

Belongs to the CAS family. Homodimer. Forms heterodimers with BCAR1/p130cas. Forms complexes with PTK2B/RAFTK, adapter protein CRKL and LYN kinase. Part of a complex composed of NEDD9, AURKA and CTTN; within the complex NEDD9 acts as a scaffold protein and is required for complex formation. Part of a ternary complex composed of SMAD3, ITCH/AIP4 and NEDD9/HEF1; within the complex NEDD9/HEF1 interacts (via N-terminus) with ITCH/AIP4; the complex mediates ubiquitination and proteasomal degradation of NEDD9/HEF1. Interacts with ID2. Interacts with CTTN (via N-terminus). Interacts with MICAL. Interacts with TXNL4/DIM1. Interacts with BCAR3 (via Ras-GEF domain). Interacts with SH2D3C isoform 1 and isoform 2. Interacts with BCAR3. Interacts with ECT2. Interacts with PTPN11/SHP-2 (via SH2 domains); the interaction is enhanced when NEDD9/CAS-L is tyrosine phosphorylated. Interacts (via C-terminus) with PLK1 (via polo box domain). Interacts with NKX2-5. Interacts with SMAD3; the interaction is inhibited by oxidation of NEDD9. Interacts with ABL1; interaction is induced by CXCL12-mediated phosphorylation of NEDD/HEF1. Interacts (via SH3 domain) with PTK2/FAK. Interacts with FYN; in the presence of PTK2. Interacts with INPPL1/SHIP2. Post-translationally, polyubiquitinated by ITCH/AIP4, leading to proteasomal degradation. In terms of processing, PTK2/FAK1 phosphorylates the protein at the YDYVHL motif (conserved among all cas proteins) following integrin stimulation. The SRC family kinases (FYN, SRC, LCK and CRK) are recruited to the phosphorylated sites and can phosphorylate other tyrosine residues. Ligation of either integrin beta-1 or B-cell antigen receptor on tonsillar B-cells and B-cell lines promotes tyrosine phosphorylation and both integrin and BCR-mediated tyrosine phosphorylation requires an intact actin network. Phosphorylation is required to recruit NEDD9 to T-cell receptor microclusters at the periphery of newly formed immunological synapses. In fibroblasts transformation with oncogene v-ABL results in an increase in tyrosine phosphorylation. Transiently phosphorylated following CD3 cross-linking and this phosphorylated form binds to CRKL and C3G. A mutant lacking the SH3 domain is phosphorylated upon CD3 cross-linking but not upon integrin beta-1 cross-linking. Tyrosine phosphorylation occurs upon stimulation of the G-protein coupled C1a calcitonin receptor. Calcitonin-stimulated tyrosine phosphorylation is mediated by calcium- and protein kinase C-dependent mechanisms and requires the integrity of the actin cytoskeleton. Phosphorylation at Ser-369 induces proteasomal degradation. Phosphorylated by LYN. Phosphorylation at Ser-780 by CSNK1D or CSNK1E, or phosphorylation of Thr-804 by CSNK1E enhances the interaction of NEDD9 with PLK1.

It is found in the cytoplasm. Its subcellular location is the cell cortex. The protein resides in the nucleus. It localises to the golgi apparatus. The protein localises to the cell projection. It is found in the lamellipodium. Its subcellular location is the cell junction. The protein resides in the focal adhesion. It localises to the cytoskeleton. The protein localises to the spindle pole. It is found in the cilium. Its subcellular location is the cilium basal body. The protein resides in the basolateral cell membrane. Functionally, negatively regulates embryonic fibroblast migration. May play an important role in integrin beta-1 or B cell antigen receptor (BCR) mediated signaling in B- and T-cells. Integrin beta-1 stimulation leads to recruitment of various proteins including CRKl and SHPTP2 to the tyrosine phosphorylated form. Promotes adhesion and migration of lymphocytes; as a result required for the correct migration of lymphocytes to the spleen and other secondary lymphoid organs. Plays a role in the organization of T-cell F-actin cortical cytoskeleton and the centralization of T-cell receptor microclusters at the immunological synapse. Negatively regulates cilia outgrowth in polarized cysts. Modulates cilia disassembly via activation of AURKA-mediated phosphorylation of HDAC6 and subsequent deacetylation of alpha-tubulin. In conjunction with NKX2-5, positively regulates transcription of genes such as COL3A1 and MMP2, resulting in increased pulmonary endothelial fibrosis in response to hypoxia. Positively regulates RANKL-induced osteoclastogenesis. Required for the maintenance of hippocampal dendritic spines in the dentate gyrus and CA1 regions, thereby involved in spatial learning and memory. In Canis lupus familiaris (Dog), this protein is Enhancer of filamentation 1.